Here is a 336-residue protein sequence, read N- to C-terminus: Ketol-acid reductoisomerase (NADP(+)) (336 aa).

The KARI N-terminal Rossmann domain occupies Met1 to Thr181. NADP(+) is bound by residues Tyr24–Gln27, Arg47, Ser50, and Ser52. His107 is a catalytic residue. Gly133 serves as a coordination point for NADP(+). In terms of domain architecture, KARI C-terminal knotted spans Ser182–Ile327. The Mg(2+) site is built by Asp190, Glu194, Glu226, and Glu230. Substrate is bound at residue Ser251.

This sequence belongs to the ketol-acid reductoisomerase family. Requires Mg(2+) as cofactor.

It catalyses the reaction (2R)-2,3-dihydroxy-3-methylbutanoate + NADP(+) = (2S)-2-acetolactate + NADPH + H(+). The enzyme catalyses (2R,3R)-2,3-dihydroxy-3-methylpentanoate + NADP(+) = (S)-2-ethyl-2-hydroxy-3-oxobutanoate + NADPH + H(+). It participates in amino-acid biosynthesis; L-isoleucine biosynthesis; L-isoleucine from 2-oxobutanoate: step 2/4. Its pathway is amino-acid biosynthesis; L-valine biosynthesis; L-valine from pyruvate: step 2/4. In terms of biological role, involved in the biosynthesis of branched-chain amino acids (BCAA). Catalyzes an alkyl-migration followed by a ketol-acid reduction of (S)-2-acetolactate (S2AL) to yield (R)-2,3-dihydroxy-isovalerate. In the isomerase reaction, S2AL is rearranged via a Mg-dependent methyl migration to produce 3-hydroxy-3-methyl-2-ketobutyrate (HMKB). In the reductase reaction, this 2-ketoacid undergoes a metal-dependent reduction by NADPH to yield (R)-2,3-dihydroxy-isovalerate. The chain is Ketol-acid reductoisomerase (NADP(+)) from Halorhodospira halophila (strain DSM 244 / SL1) (Ectothiorhodospira halophila (strain DSM 244 / SL1)).